The chain runs to 317 residues: Protease 7 (317 aa).

A signal peptide spans 1-20 (MRAKLLGIVLTTPIAISSFA). The Periplasmic segment spans residues 21–31 (STETLSFTPDN). The beta stranded transmembrane segment at 32-41 (INADISLGTL) threads the bilayer. Over 42–69 (SGKTKERVYLAEEGGRKVSQLDWKFNNA) the chain is Extracellular. Residues 70-78 (AIIKGAINW) form a beta stranded membrane-spanning segment. The Periplasmic segment spans residues 79–83 (DLMPQ). Residues 84-92 (ISIGAAGWT) traverse the membrane as a beta stranded segment. Topologically, residues 93–130 (TLGSRGGNMVDQDWMDSSNPGTWTDESRHPDTQLNYAN) are extracellular. Catalysis depends on residues aspartate 103 and aspartate 105. Residues 131 to 140 (EFDLNIKGWL) form a beta stranded membrane-spanning segment. The Periplasmic portion of the chain corresponds to 141–145 (LNEPN). A beta stranded membrane pass occupies residues 146–156 (YRLGLMAGYQE). The Extracellular portion of the chain corresponds to 157–197 (SRYSFTARGGSYIYSSEEGFRDDIGSFPNGERAIGYKQRFK). A beta stranded membrane pass occupies residues 198-209 (MPYIGLTGSYRY). Residues 210–211 (ED) are Periplasmic-facing. The beta stranded transmembrane segment at 212–221 (FELGGTFKYS) threads the bilayer. At 222 to 250 (GWVESSDNDEHYDPGKRITYRSKVKDQNY) the chain is on the extracellular side. Active-site residues include aspartate 230 and histidine 232. Residues 251–261 (YSVAVNAGYYV) form a beta stranded membrane-spanning segment. The Periplasmic portion of the chain corresponds to 262–264 (TPN). A beta stranded transmembrane segment spans residues 265–274 (AKVYVEGAWN). The Extracellular segment spans residues 275–306 (RVTNKKGNTSLYDHNNNTSDYSKNGAGIENYN). The beta stranded transmembrane segment at 307-316 (FITTAGLKYT) threads the bilayer. Residue phenylalanine 317 is a topological domain, periplasmic.

It belongs to the peptidase A26 family. As to quaternary structure, homopentamer.

The protein resides in the cell outer membrane. It carries out the reaction Has a virtual requirement for Arg in the P1 position and a slightly less stringent preference for this residue in the P1' position, which can also contain Lys, Gly or Val.. Inhibited by zinc. Functionally, protease that can cleave T7 RNA polymerase, ferric enterobactin receptor protein (FEP), antimicrobial peptide protamine and other proteins. This protease has a specificity for paired basic residues. This is Protease 7 (ompT) from Escherichia coli (strain K12).